The chain runs to 324 residues: tRNA pseudouridine synthase B (324 aa).

Asp49 acts as the Nucleophile in catalysis. The segment at 87–107 (RSTDDLEGQPTKTSDKRPSRE) is disordered.

The protein belongs to the pseudouridine synthase TruB family. Type 1 subfamily.

It catalyses the reaction uridine(55) in tRNA = pseudouridine(55) in tRNA. Responsible for synthesis of pseudouridine from uracil-55 in the psi GC loop of transfer RNAs. This Brucella melitensis biotype 1 (strain ATCC 23456 / CCUG 17765 / NCTC 10094 / 16M) protein is tRNA pseudouridine synthase B.